A 1377-amino-acid chain; its full sequence is MASLSDQDLEMGLFCPRNYQTEMFEASLQENIIVAMDTGSGKTHVALLRIMNELETRRPQKLIWFLAPTVALCFQQHDVITKNLPAVKSRTLTGQDKVELWTEQAIWDAILKDMQVVVSTHAVLADAMSNGFVRVSQLGLLIFDEAHHCMRRHPANRIMQDFYHPTLVKQGPDAVPGILGLTASPVVRTNSQELSMIESNMNAICKTPRAHRQELLTHTHRPHLQQIWYTPVNIDDPTSGTRTLRALIHAWETIDLEDDPYVKQLRRSTFDGKALQKALLTRKTYCNESLRRFVERSCHIFQELGGWAVDYFIHASIRRLREKIDDSALMLDWDNEEKEYLASFLSNIATIQSDPPRRPEDFIPSPKLEALISFLSSTDDSTFSGLIFAKQRATVTVLATLLSVHPLTKDRFRCAAFVGWSGGGNRKDLIGELLSMQMQRDTLSEFRSGQKNLIVATDVLEEGIDISACSVVICYDKPANVKSFVQRRGRARRKESTFAILFSTDDELCDLRKWQLLEEAMIEAYQDDERKRCEALALETMAEVVTERFEVESTGAVLTADTAVARLHHFCSILPQQPYVDNRPELSFEYDGTGRRRGTFKLPSCVHPDVRRTRGEKWWTTERAATKEAAFQTCKRLYEFGLLNDHLLPLTRKPELRLTDFGGLPSIIEVAEQYDPWTDWAYSWSSPDIHQSRIRVQLNGNPEYQLSMSLMGPTVLPALDAMTLFWDSQNIFTLAFDAAQRVPLVPGDVIEHMRAITALYLQAPSSRSIREERDYVALFGPDLPHTELGAWLLKNGGNDTALDVYSRQVASPTMGIVRDRTRYDEPLLFKKWVVTEDGDVAVVEMECHSLPKRRNLLQRQTLAQGEIVTTAVDTAPAKARIIPATACTIDRLPFTDTIFGLFISAILDRLEATLIATRLCETILQDVQFSSTRHVITAISAPTAQSPTDYQRYEFFGDSVLKFTVSCQLYMQHPNWPEGYLSEGRDEIVQNNRLARAALDVGLDAFILTRRFTPRKWTAPLISEKAVEVAGKRPLSSKVLADVVESLIGAAYMDGGQAKAHTCIRRLLPEIEICPITPPPVHESAPHVMNDSLKQHLGYTFVNEALLVEALTHPSCRSDASTQSYQRLEFLGDAVLDMVVVHAMAHHAVECPQGEMTMIKHALTNANLLAFFCMEFVVAQEHTDVDAVPAAGGFALRSEQKPIELWRFMRSEALDLNNARETVLHRHSQLRAEIVHALHHGAQYPWQALSQLNADKFFSDIVESILGAIFVDSRGDLDVCAMFVERIGLLPYLRRILADRVDVMHPRHTAQRLSKGEALFTAKRVVDGSGNASYRCVVKRNKEEIVVVEGCLSSEEAEVKAANATIGILRANAVNLV.

Positions 23–203 (MFEASLQENI…LSMIESNMNA (181 aa)) constitute a Helicase ATP-binding domain. 36 to 43 (MDTGSGKT) provides a ligand contact to ATP. Positions 144–147 (DEAH) match the DEAH box motif. The region spanning 367 to 544 (KLEALISFLS…ALALETMAEV (178 aa)) is the Helicase C-terminal domain. The Dicer dsRNA-binding fold domain maps to 563-657 (AVARLHHFCS…LPLTRKPELR (95 aa)). RNase III domains lie at 916–1056 (ATRL…MDGG) and 1090–1274 (NDSL…VDSR). Mg(2+) is bound by residues Glu1129, Asp1260, and Glu1263.

It belongs to the helicase family. Dicer subfamily. The cofactor is Mg(2+). It depends on Mn(2+) as a cofactor.

Functionally, dicer-like endonuclease involved in cleaving double-stranded RNA in the RNA interference (RNAi) pathway. Produces 21 to 25 bp dsRNAs (siRNAs) which target the selective destruction of homologous RNAs leading to sequence-specific suppression of gene expression, called post-transcriptional gene silencing (PTGS). Part of a broad host defense response against viral infection and transposons. In Aspergillus terreus (strain NIH 2624 / FGSC A1156), this protein is Dicer-like protein 2 (dcl2).